The sequence spans 492 residues: Protein nucleotidyltransferase YdiU (492 aa).

Residues G91, G93, R94, K114, D126, G127, R180, and R187 each contribute to the ATP site. The Proton acceptor role is filled by D256. Residues N257 and D266 each coordinate Mg(2+). An ATP-binding site is contributed by D266.

Belongs to the SELO family. Mg(2+) serves as cofactor. Requires Mn(2+) as cofactor.

It catalyses the reaction L-seryl-[protein] + ATP = 3-O-(5'-adenylyl)-L-seryl-[protein] + diphosphate. The enzyme catalyses L-threonyl-[protein] + ATP = 3-O-(5'-adenylyl)-L-threonyl-[protein] + diphosphate. It carries out the reaction L-tyrosyl-[protein] + ATP = O-(5'-adenylyl)-L-tyrosyl-[protein] + diphosphate. The catalysed reaction is L-histidyl-[protein] + UTP = N(tele)-(5'-uridylyl)-L-histidyl-[protein] + diphosphate. It catalyses the reaction L-seryl-[protein] + UTP = O-(5'-uridylyl)-L-seryl-[protein] + diphosphate. The enzyme catalyses L-tyrosyl-[protein] + UTP = O-(5'-uridylyl)-L-tyrosyl-[protein] + diphosphate. Its function is as follows. Nucleotidyltransferase involved in the post-translational modification of proteins. It can catalyze the addition of adenosine monophosphate (AMP) or uridine monophosphate (UMP) to a protein, resulting in modifications known as AMPylation and UMPylation. This chain is Protein nucleotidyltransferase YdiU, found in Synechococcus elongatus (strain ATCC 33912 / PCC 7942 / FACHB-805) (Anacystis nidulans R2).